The chain runs to 693 residues: Polyribonucleotide nucleotidyltransferase (693 aa).

The Mg(2+) site is built by Asp486 and Asp492. The KH domain occupies 553-612 (PRFSSMRIDTEKIKDVIGKGGATIRSITEQTGTTIEIEDDGSVKIAATDKAAAANARRLI). Positions 622–690 (GRIYDAKVTK…RQGRVRLSIK (69 aa)) constitute an S1 motif domain.

Belongs to the polyribonucleotide nucleotidyltransferase family. As to quaternary structure, component of the RNA degradosome, which is a multiprotein complex involved in RNA processing and mRNA degradation. It depends on Mg(2+) as a cofactor.

The protein resides in the cytoplasm. The catalysed reaction is RNA(n+1) + phosphate = RNA(n) + a ribonucleoside 5'-diphosphate. In terms of biological role, involved in mRNA degradation. Catalyzes the phosphorolysis of single-stranded polyribonucleotides processively in the 3'- to 5'-direction. The sequence is that of Polyribonucleotide nucleotidyltransferase from Dichelobacter nodosus (strain VCS1703A).